We begin with the raw amino-acid sequence, 273 residues long: 2,3,4,5-tetrahydropyridine-2,6-dicarboxylate N-succinyltransferase (273 aa).

Positions 106 and 143 each coordinate substrate.

It belongs to the transferase hexapeptide repeat family. In terms of assembly, homotrimer.

The protein localises to the cytoplasm. It catalyses the reaction (S)-2,3,4,5-tetrahydrodipicolinate + succinyl-CoA + H2O = (S)-2-succinylamino-6-oxoheptanedioate + CoA. It functions in the pathway amino-acid biosynthesis; L-lysine biosynthesis via DAP pathway; LL-2,6-diaminopimelate from (S)-tetrahydrodipicolinate (succinylase route): step 1/3. The polypeptide is 2,3,4,5-tetrahydropyridine-2,6-dicarboxylate N-succinyltransferase (Wolbachia sp. subsp. Brugia malayi (strain TRS)).